The sequence spans 380 residues: tRNA pseudouridine synthase B (380 aa).

Aspartate 63 functions as the Nucleophile in the catalytic mechanism. The interval 309–339 (QNVEDDNDDNDDNDDNDDNDDNDDNDDNDDN) is disordered. Acidic residues predominate over residues 311 to 338 (VEDDNDDNDDNDDNDDNDDNDDNDDNDD).

The protein belongs to the pseudouridine synthase TruB family. Type 1 subfamily.

It catalyses the reaction uridine(55) in tRNA = pseudouridine(55) in tRNA. Functionally, responsible for synthesis of pseudouridine from uracil-55 in the psi GC loop of transfer RNAs. The protein is tRNA pseudouridine synthase B of Psychrobacter arcticus (strain DSM 17307 / VKM B-2377 / 273-4).